The primary structure comprises 428 residues: Histidine--tRNA ligase (428 aa).

It belongs to the class-II aminoacyl-tRNA synthetase family.

The protein localises to the cytoplasm. The enzyme catalyses tRNA(His) + L-histidine + ATP = L-histidyl-tRNA(His) + AMP + diphosphate + H(+). This Korarchaeum cryptofilum (strain OPF8) protein is Histidine--tRNA ligase.